Reading from the N-terminus, the 123-residue chain is Small ribosomal subunit protein uS12 (123 aa).

Asp89 carries the 3-methylthioaspartic acid modification.

It belongs to the universal ribosomal protein uS12 family. As to quaternary structure, part of the 30S ribosomal subunit. Contacts proteins S8 and S17. May interact with IF1 in the 30S initiation complex.

Functionally, with S4 and S5 plays an important role in translational accuracy. In terms of biological role, interacts with and stabilizes bases of the 16S rRNA that are involved in tRNA selection in the A site and with the mRNA backbone. Located at the interface of the 30S and 50S subunits, it traverses the body of the 30S subunit contacting proteins on the other side and probably holding the rRNA structure together. The combined cluster of proteins S8, S12 and S17 appears to hold together the shoulder and platform of the 30S subunit. This is Small ribosomal subunit protein uS12 from Myxococcus xanthus.